The sequence spans 59 residues: MAVPARRTSKMRKRNRRGHIKLATPNLAPCPNCGELRVSHRVCPSCGYYNGKQVVKVNN.

The protein belongs to the bacterial ribosomal protein bL32 family.

The protein is Large ribosomal subunit protein bL32 of Lactiplantibacillus plantarum (strain ATCC BAA-793 / NCIMB 8826 / WCFS1) (Lactobacillus plantarum).